A 1473-amino-acid chain; its full sequence is Collagen alpha-1(XVII) chain (1473 aa).

The segment covering 1 to 19 has biased composition (basic and acidic residues); that stretch reads MDITQKNKRDGTEVTERII. Disordered stretches follow at residues 1–155 and 168–188; these read MDIT…PSTR and GSRSASVSPTRNSSNTLPIPK. Residues 1 to 474 lie on the Cytoplasmic side of the membrane; the sequence is MDITQKNKRD…CGSWCSWWKW (474 aa). The tract at residues 1 to 572 is nonhelical region (NC16); the sequence is MDITQKNKRD…MTEQENGNLR (572 aa). Composition is skewed to polar residues over residues 57–96, 111–120, and 170–184; these read LTHGSSGYINSSGSLRGNASTSSYRRAHSPASTLPNSPGS, EGSSSGNSSP, and RSASVSPTRNSSNTL. The tract at residues 146–231 is necessary for interaction with DST and for the recruitment of DST to hemidesmosome; sequence RLQSASPSTR…WSSTLPAGSS (86 aa). Residues 475-495 form a helical; Signal-anchor for type II membrane protein membrane-spanning segment; the sequence is LLGLLLTWLLLLGLLFGLIAL. Residues 496-1473 are Extracellular-facing; sequence AEEVRKLKAR…RRRRSIAVKP (978 aa). Disordered stretches follow at residues 567–1017, 1173–1234, and 1261–1308; these read ENGN…LSSS, FRGI…ISGA, and SFIV…SSMG. A triple-helical region region spans residues 573–1459; that stretch reads GSPGPKGDMG…KGEKGDKGDQ (887 aa). Composition is skewed to low complexity over residues 619–638, 667–678, 729–742, and 769–790; these read EPGMEGPMGQRGREGPMGPR, PGSVGPKGSIGP, EPGAKGAMGPAGPD, and PGKPGLTGPQGPQGIPGTPGRP. Residues 814–835 are compositionally biased toward pro residues; it reads PGPPGPPGAMGPPGPPGAPGPV. Composition is skewed to low complexity over residues 837-847 and 854-866; these read PAGLPGQQGPR and GESFMGSSSSFSE. Composition is skewed to pro residues over residues 878-899 and 913-922; these read PPGPPGPPGPPGEGLPGPPGPP and PPGPPGPPGP. The span at 940-957 shows a compositional bias: low complexity; the sequence is FPGLSGSGSSSLGLNLQG. Pro residues-rich tracts occupy residues 1001–1011 and 1179–1188; these read PPGPPGPPGPP and PPGPPGPPGL. Residues 1198 to 1210 show a composition bias toward polar residues; sequence TEDLSSYLQTAGL. 2 stretches are compositionally biased toward pro residues: residues 1214-1228 and 1266-1275; these read PGPPGPPGPPGPRGP and PPGPPGPQGP. A compositionally biased stretch (low complexity) spans 1283-1307; it reads STDSSYSRSGSSSSFSRDTSYSSSM. N-linked (GlcNAc...) asparagine glycosylation occurs at asparagine 1404. The interval 1417–1473 is disordered; that stretch reads GAIPGPPGQKGEMGIPGPKGERGPAGPPGPRGHKGEKGDKGDQFYIGRRRRSIAVKP. The segment covering 1449-1458 has biased composition (basic and acidic residues); it reads HKGEKGDKGD. The interval 1460 to 1473 is nonhelical region (NC1); it reads FYIGRRRRSIAVKP. The segment covering 1463 to 1473 has biased composition (basic residues); sequence GRRRRSIAVKP.

Homotrimers of alpha 1(XVII)chains. Interacts (via cytoplasmic region) with ITGB4 (via cytoplasmic region). Interacts (via cytoplasmic region) with DST (via N-terminus). Interacts (via N-terminus) with PLEC. Interacts (via cytoplasmic region) with DSP. In terms of processing, the intracellular/endo domain is disulfide-linked. Post-translationally, prolines at the third position of the tripeptide repeating unit (G-X-Y) are hydroxylated in some or all of the chains. The ectodomain is shedded from the surface of keratinocytes resulting in a 120-kDa soluble form, also named as 120 kDa linear IgA disease antigen homolog. The shedding is mediated by membrane-bound metalloproteases.

Its subcellular location is the cell junction. The protein localises to the hemidesmosome. It localises to the membrane. The protein resides in the secreted. It is found in the extracellular space. Its subcellular location is the extracellular matrix. The protein localises to the basement membrane. May play a role in the integrity of hemidesmosome and the attachment of basal keratinocytes to the underlying basement membrane. Its function is as follows. The 120 kDa linear IgA disease antigen homolog is an anchoring filament component involved in dermal-epidermal cohesion. In Bos taurus (Bovine), this protein is Collagen alpha-1(XVII) chain (COL17A1).